A 202-amino-acid chain; its full sequence is Large ribosomal subunit protein uL4 (202 aa).

A compositionally biased stretch (polar residues) spans 42–52 (GTKAQKSRSQV). The disordered stretch occupies residues 42 to 70 (GTKAQKSRSQVSGTTKKSKKQKGGGARHG).

It belongs to the universal ribosomal protein uL4 family. Part of the 50S ribosomal subunit.

Functionally, one of the primary rRNA binding proteins, this protein initially binds near the 5'-end of the 23S rRNA. It is important during the early stages of 50S assembly. It makes multiple contacts with different domains of the 23S rRNA in the assembled 50S subunit and ribosome. Its function is as follows. Forms part of the polypeptide exit tunnel. This Xylella fastidiosa (strain Temecula1 / ATCC 700964) protein is Large ribosomal subunit protein uL4.